The sequence spans 168 residues: Ribosome maturation factor RimP (168 aa).

Belongs to the RimP family.

It is found in the cytoplasm. Its function is as follows. Required for maturation of 30S ribosomal subunits. This is Ribosome maturation factor RimP from Bordetella parapertussis (strain 12822 / ATCC BAA-587 / NCTC 13253).